A 1533-amino-acid polypeptide reads, in one-letter code: DNA topoisomerase 2-alpha (1533 aa).

Met1 bears the N-acetylmethionine mark. Positions Met1–Glu22 are disordered. Ser4 is subject to Phosphoserine. The segment covering Gln7–Asn16 has biased composition (polar residues). A Glycyl lysine isopeptide (Lys-Gly) (interchain with G-Cter in SUMO2) cross-link involves residue Lys17. Residues Asn91, Asn120, and Ser148 to Asn150 each bind ATP. Residues Lys156 and Lys157 each participate in a glycyl lysine isopeptide (Lys-Gly) (interchain with G-Cter in SUMO2) cross-link. Gly161–Lys168 lines the ATP pocket. A Glycyl lysine isopeptide (Lys-Gly) (interchain with G-Cter in SUMO2) cross-link involves residue Lys261. Thr282 is subject to Phosphothreonine. An interaction with DNA region spans residues Lys342–Lys344. Lys352 is covalently cross-linked (Glycyl lysine isopeptide (Lys-Gly) (interchain with G-Cter in SUMO2)). An ATP-binding site is contributed by Gln376–Lys378. Residues Lys386, Lys397, Lys416, Lys418, Lys425, and Lys440 each participate in a glycyl lysine isopeptide (Lys-Gly) (interchain with G-Cter in SUMO2) cross-link. The Toprim domain occupies Cys455–Glu572. Glu461 contributes to the Mg(2+) binding site. Glycyl lysine isopeptide (Lys-Gly) (interchain with G-Cter in SUMO2) cross-links involve residues Lys466, Lys480, and Lys529. Positions 541 and 543 each coordinate Mg(2+). Residues Lys584, Lys599, Lys614, Lys622, Lys625, Lys632, Lys639, Lys655, Lys662, and Lys676 each participate in a glycyl lysine isopeptide (Lys-Gly) (interchain with G-Cter in SUMO2) cross-link. The region spanning Ile715 to Leu1171 is the Topo IIA-type catalytic domain. Catalysis depends on Tyr805, which acts as the O-(5'-phospho-DNA)-tyrosine intermediate. The tract at residues Lys990–Ser999 is interaction with DNA. Lys1075 participates in a covalent cross-link: Glycyl lysine isopeptide (Lys-Gly) (interchain with G-Cter in SUMO2). 2 disordered regions span residues Trp1090–Ser1121 and Ala1183–Cys1215. Residues Asp1099–Asn1108 are compositionally biased toward acidic residues. Ser1106 carries the phosphoserine; by CK1 modification. Glycyl lysine isopeptide (Lys-Gly) (interchain with G-Cter in SUMO2) cross-links involve residues Lys1114, Lys1196, and Lys1204. Thr1205 is subject to Phosphothreonine. Ser1213 bears the Phosphoserine mark. A Glycyl lysine isopeptide (Lys-Gly) (interchain with G-Cter in SUMO2) cross-link involves residue Lys1228. The interval Ala1231 to Phe1533 is disordered. Lys1240 is covalently cross-linked (Glycyl lysine isopeptide (Lys-Gly) (interchain with G-Cter in SUMO1); alternate). Residue Lys1240 forms a Glycyl lysine isopeptide (Lys-Gly) (interchain with G-Cter in SUMO2); alternate linkage. Residue Thr1244 is modified to Phosphothreonine. Position 1247 is a phosphoserine (Ser1247). Residues Glu1256–Thr1272 show a composition bias toward basic and acidic residues. Glycyl lysine isopeptide (Lys-Gly) (interchain with G-Cter in SUMO2) cross-links involve residues Lys1259, Lys1276, Lys1283, and Lys1286. A phosphoserine mark is found at Ser1295, Ser1297, Ser1299, and Ser1302. Thr1327 is subject to Phosphothreonine. A phosphoserine mark is found at Ser1332 and Ser1337. Phosphothreonine is present on Thr1343. Phosphoserine is present on residues Ser1351 and Ser1354. A compositionally biased stretch (basic and acidic residues) spans Thr1360–Pro1371. Glycyl lysine isopeptide (Lys-Gly) (interchain with G-Cter in SUMO2) cross-links involve residues Lys1363, Lys1367, and Lys1373. 2 positions are modified to phosphoserine: Ser1374 and Ser1377. Lys1387 is covalently cross-linked (Glycyl lysine isopeptide (Lys-Gly) (interchain with G-Cter in SUMO2)). Residues Ser1393 and Ser1395 each carry the phosphoserine modification. Over residues Lys1409–Gly1433 the composition is skewed to low complexity. Residue Lys1424 forms a Glycyl lysine isopeptide (Lys-Gly) (interchain with G-Cter in SUMO2); alternate linkage. The residue at position 1424 (Lys1424) is an N6-acetyllysine; alternate. An interaction with PLSCR1 region spans residues Lys1435–Lys1441. Residues Ala1443–Lys1455 show a composition bias toward basic and acidic residues. A Glycyl lysine isopeptide (Lys-Gly) (interchain with G-Cter in SUMO2); alternate cross-link involves residue Lys1444. Residue Lys1444 is modified to N6-acetyllysine; alternate. Residue Ser1451 is modified to Phosphoserine. Glycyl lysine isopeptide (Lys-Gly) (interchain with G-Cter in SUMO2) cross-links involve residues Lys1456 and Lys1461. Ser1471 bears the Phosphoserine mark. Thr1472 carries the phosphothreonine modification. Residues Ser1473, Ser1476, and Ser1478 each carry the phosphoserine modification. Glycyl lysine isopeptide (Lys-Gly) (interchain with G-Cter in SUMO2) cross-links involve residues Lys1486 and Lys1494. Residues Pro1493 to Leu1504 show a composition bias toward basic and acidic residues. Phosphoserine is present on residues Ser1497 and Ser1527.

This sequence belongs to the type II topoisomerase family. Homodimer. Interacts with COPS5. Interacts with RECQL5; this stimulates DNA decatenation. Interacts with SETMAR; stimulates the topoisomerase activity. Interacts with DHX9; this interaction occurs in a E2 enzyme UBE2I- and RNA-dependent manner, negatively regulates DHX9-mediated double-stranded DNA and RNA duplex helicase activity and stimulates TOP2A-mediated supercoiled DNA relaxation activity. Interacts with HNRNPU (via C-terminus); this interaction protects the topoisomerase TOP2A from degradation and positively regulates the relaxation of supercoiled DNA in a RNA-dependent manner. Interacts with MCM3AP. Interacts with ERCC6. Interacts with PLSCR1. Interacts with GCNA; this interaction allows the resolution of topoisomerase II (TOP2A) DNA-protein cross-links. Interacts with POL1RA/RPA1 (via dock II) and UBTF in the context of Pol I complex; may assist Pol I transcription initiation by releasing supercoils occurring during DNA unwinding. Interacts with TPRN; TPRN interacts with a number of DNA damage response proteins, is recruited to sites of DNA damage and may play a role in DNA damage repair. Mg(2+) serves as cofactor. The cofactor is Mn(2+). Requires Ca(2+) as cofactor. In terms of processing, phosphorylation has no effect on catalytic activity. However, phosphorylation at Ser-1106 by CSNK1D/CK1 promotes DNA cleavable complex formation.

It localises to the cytoplasm. It is found in the nucleus. The protein localises to the nucleoplasm. The protein resides in the nucleolus. It catalyses the reaction ATP-dependent breakage, passage and rejoining of double-stranded DNA.. In terms of biological role, key decatenating enzyme that alters DNA topology by binding to two double-stranded DNA molecules, generating a double-stranded break in one of the strands, passing the intact strand through the broken strand, and religating the broken strand. May play a role in regulating the period length of BMAL1 transcriptional oscillation. This is DNA topoisomerase 2-alpha (TOP2A) from Sus scrofa (Pig).